The sequence spans 362 residues: MTRPKSFRINAKNYFLTYPKCSLTKEEALSQLNNLETPTSKKYIKVCRELHENGEPHLHVLIQFEGKFQCKNQRFFDLVSPTRSAHFHPNIQGAKSSSDVKSYLEKDGDTLEWGEFQIDGRSARGGQQSANDAYAQALNTGSKSEALNVLRELAPKDYVLQFHNLNSNLDRIFTPPLEVYVSPFLSSSFDRVPEELEEWVAENVKDAAARPLRPISIVIEGESRTGKTVWARSLGPHNYLCGHLDLSPKVYSNDAWYNVIDDVDPHYLKHFKEFMGAQRDWQSNTKYGKPVQIKGGIPTIFLCNPGPNSSYKEYLDEEKNSALKAWALKNAEFITLNEPLYSGTYQGPTQNSEEEVHPEEEN.

Positions 8–116 (RINAKNYFLT…DGDTLEWGEF (109 aa)) constitute a CRESS-DNA virus Rep endonuclease domain. The short motif at 15–18 (FLTY) is the RCR-1 element. Positions 49, 57, and 59 each coordinate a divalent metal cation. The short motif at 57–59 (HLH) is the RCR-2 element. Residue Tyr103 is the For DNA cleavage activity of the active site. The RCR-3 signature appears at 103 to 106 (YLEK). An a divalent metal cation-binding site is contributed by Asp107. Residues 143–153 (KSEALNVLREL) are binding to RBR1. The oligomerization stretch occupies residues 156 to 176 (KDYVLQFHNLNSNLDRIFTPP). Residue 221 to 228 (GESRTGKT) coordinates ATP. The tract at residues 341 to 362 (YSGTYQGPTQNSEEEVHPEEEN) is disordered. Over residues 352–362 (SEEEVHPEEEN) the composition is skewed to acidic residues.

The protein belongs to the geminiviridae Rep protein family. Homooligomer. Interacts with the replication enhancer protein (REn). Interacts with host retinoblastoma-related protein 1 (RBR1), and may thereby induce the transcription of host replicative enzymes even if the cell is not dividing anymore. Interacts with host PCNA. Interacts with host SCE1 protein. Binds to host RAD54 protein to ensure geminiviral replication. It depends on Mg(2+) as a cofactor. Requires Mn(2+) as cofactor.

The protein localises to the host nucleus. Its function is as follows. Essential for the replication of viral ssDNA. The closed circular ssDNA genome is first converted to a superhelical dsDNA. Rep binds a specific region at the genome origin of replication. It introduces an endonucleolytic nick within the conserved sequence 5'-TAATATTAC-3' in the intergenic region of the genome present in all geminiviruses, thereby initiating the rolling circle replication (RCR). Following cleavage, binds covalently to the 5'-phosphate of DNA as a tyrosyl ester. The cleavage gives rise to a free 3'-OH that serves as a primer for the cellular DNA polymerase. The polymerase synthesizes the (+) strand DNA by rolling circle mechanism. After one round of replication, a Rep-catalyzed nucleotidyl transfer reaction releases a circular single-stranded virus genome, thereby terminating the replication. Displays origin-specific DNA cleavage, nucleotidyl transferase, ATPase and helicase activities. In Cynanchum acutum (Little mallow), this protein is Replication-associated protein.